The primary structure comprises 387 residues: Galanin receptor type 2 (387 aa).

The Extracellular segment spans residues 1–28; the sequence is MNVSGCPGAGNASQAGGGGGWHPEAVIV. N-linked (GlcNAc...) asparagine glycans are attached at residues Asn2 and Asn11. The chain crosses the membrane as a helical span at residues 29–49; it reads PLLFALIFLVGTVGNTLVLAV. Residues 50–60 lie on the Cytoplasmic side of the membrane; it reads LLRGGQAVSTT. The chain crosses the membrane as a helical span at residues 61–81; sequence NLFILNLGVADLCFILCCVPF. Topologically, residues 82–99 are extracellular; sequence QATIYTLDGWVFGSLLCK. Cys98 and Cys175 are disulfide-bonded. The helical transmembrane segment at 100–121 threads the bilayer; it reads AVHFLIFLTMHASSFTLAAVSL. Residues 122–141 are Cytoplasmic-facing; that stretch reads DRYLAIRYPLHSRELRTPRN. A helical membrane pass occupies residues 142–162; sequence ALAAIGLIWGLSLLFSGPYLS. The Extracellular segment spans residues 163–187; it reads YYRQSQLANLTVCHPAWSAPRRRAM. Residues 188 to 208 traverse the membrane as a helical segment; the sequence is DICTFVFSYLLPVLVLGLTYA. At 209–237 the chain is on the cytoplasmic side; it reads RTLRYLWRAVDPVAAGSGARRAKRKVTRM. The helical transmembrane segment at 238–258 threads the bilayer; that stretch reads ILIVAALFCLCWMPHHALILC. The Extracellular portion of the chain corresponds to 259-260; it reads VW. The helical transmembrane segment at 261–281 threads the bilayer; the sequence is FGQFPLTRATYALRILSHLVS. Over 282–387 the chain is Cytoplasmic; it reads YANSCVNPIV…GDSILTVDVA (106 aa).

The protein belongs to the G-protein coupled receptor 1 family. As to expression, expressed abundantly within the central nervous system in both hypothalamus and hippocampus. In peripheral tissues, the strongest expression was observed in heart, kidney, liver, and small intestine.

It is found in the cell membrane. Functionally, receptor for the hormone galanin and GALP. Receptor for the hormone spexin-1. The activity of this receptor is mediated by G proteins that activate the phospholipase C/protein kinase C pathway (via G(q)) and that inhibit adenylyl cyclase (via G(i)). This is Galanin receptor type 2 (GALR2) from Homo sapiens (Human).